The primary structure comprises 314 residues: Putative S-adenosyl-L-methionine-dependent methyltransferase MAV_4441 (314 aa).

Residues D138 and 167–168 (DL) each bind S-adenosyl-L-methionine.

It belongs to the UPF0677 family.

Functionally, exhibits S-adenosyl-L-methionine-dependent methyltransferase activity. The polypeptide is Putative S-adenosyl-L-methionine-dependent methyltransferase MAV_4441 (Mycobacterium avium (strain 104)).